A 76-amino-acid chain; its full sequence is Demidefensin-3 (76 aa).

An N-terminal signal peptide occupies residues 1-22 (MRTLALHTAMLLLVALHAQAEA). Residues 23-64 (RQARADEAAAQQQPGADDQGMAHSFTWPENAALPLSESERGL) constitute a propeptide that is removed on maturation. The disordered stretch occupies residues 25-45 (ARADEAAAQQQPGADDQGMAH). The span at 30–44 (AAAQQQPGADDQGMA) shows a compositional bias: low complexity. A disulfide bridge connects residues C68 and C73. The propeptide occupies 74–76 (RLL).

The protein belongs to the alpha-defensin family. Theta subfamily. Forms a cyclic homodimer; disulfide-linked. In terms of processing, this is a cyclic peptide.

Its function is as follows. Has antimicrobial activities against bacteria and fungi. The protein is Demidefensin-3 of Macaca mulatta (Rhesus macaque).